Consider the following 297-residue polypeptide: GTPase Era (297 aa).

Residues 3 to 171 enclose the Era-type G domain; the sequence is KSGFVSIVGR…IKVIQNYLEE (169 aa). The interval 11-18 is G1; it reads GRPNVGKS. 11–18 contributes to the GTP binding site; that stretch reads GRPNVGKS. A G2 region spans residues 37 to 41; sequence QTTRN. The tract at residues 58 to 61 is G3; it reads DTPG. Residues 58–62 and 120–123 contribute to the GTP site; these read DTPGI and NKID. Residues 120 to 123 form a G4 region; it reads NKID. The tract at residues 150 to 152 is G5; sequence ISA. A KH type-2 domain is found at 194 to 280; sequence IREKVLHYLN…NLQLWVKVKE (87 aa).

The protein belongs to the TRAFAC class TrmE-Era-EngA-EngB-Septin-like GTPase superfamily. Era GTPase family. Monomer.

It localises to the cytoplasm. The protein resides in the cell membrane. Its function is as follows. An essential GTPase that binds both GDP and GTP, with rapid nucleotide exchange. Plays a role in 16S rRNA processing and 30S ribosomal subunit biogenesis and possibly also in cell cycle regulation and energy metabolism. This Clostridioides difficile (strain 630) (Peptoclostridium difficile) protein is GTPase Era.